A 211-amino-acid polypeptide reads, in one-letter code: Synaptosomal-associated protein 23 (211 aa).

Position 1 is an N-acetylmethionine (Met1). Ser5, Ser6, Ser20, Ser23, and Ser34 each carry phosphoserine. The t-SNARE coiled-coil homology 1 domain maps to 14 to 76; that stretch reads HQITDESLES…RETEKTLTEL (63 aa). Positions 23-76 form a coiled coil; that stretch reads STRRILGLAIESQDAGIKTITMLDEQKEQLNRIEEGLDQINKDMRETEKTLTEL. S-palmitoyl cysteine attachment occurs at residues Cys79, Cys80, Cys83, Cys85, and Cys87. Ser110 bears the Phosphoserine mark. The S-palmitoyl cysteine moiety is linked to residue Cys112. The 63-residue stretch at 146 to 208 folds into the t-SNARE coiled-coil homology 2 domain; the sequence is DAREDEMEEN…DIANARAKKL (63 aa). Ser161 carries the phosphoserine modification.

Belongs to the SNAP-25 family. As to quaternary structure, homotetramer (via coiled-coil domain), also forms heterotetramers with STX4 and VAMP3. Found in a complex with VAMP8 and STX1A. Found in a complex with VAMP8 and STX4 in pancreas. Interacts simultaneously with SNAPIN and SYN4. Interacts with STX1A. Interacts with STX12. Interacts tightly to multiple syntaxins and synaptobrevins/VAMPs. Interacts with ZDHHC13 (via ANK repeats). Interacts with ZDHHC17 (via ANK repeats). In terms of tissue distribution, ubiquitous. Highest levels where found in placenta.

The protein localises to the cell membrane. It localises to the synapse. The protein resides in the synaptosome. Functionally, essential component of the high affinity receptor for the general membrane fusion machinery and an important regulator of transport vesicle docking and fusion. The sequence is that of Synaptosomal-associated protein 23 (SNAP23) from Homo sapiens (Human).